The following is a 75-amino-acid chain: uncharacterized protein (75 aa).

2 consecutive transmembrane segments (helical) span residues 7–26 (LINAVFRIACGLTIMSAASA) and 36–58 (MHLFYIFMGAMKAGSGILRFCPV).

Its subcellular location is the cell membrane. This is an uncharacterized protein from Bacillus subtilis (strain 168).